Here is a 148-residue protein sequence, read N- to C-terminus: MVQTVLNSVWLWRSVLLRLTFSDSGSFLGQSFLLFSSGFWSVLVEQLEGFSSGVSVQSVLELSNGWRNLQSDGQDLLLSLQSDIFWPFDVSGQVSLWLDSLANTEVLWSRVSQWVLSLVRLSGLSTEWSWSNFLTWSHLFFQLSCSLY.

The signal sequence occupies residues Met1–Ser22.

This is an uncharacterized protein from Saccharomyces cerevisiae (strain ATCC 204508 / S288c) (Baker's yeast).